A 145-amino-acid polypeptide reads, in one-letter code: Chaperonin GroEL (145 aa).

Belongs to the chaperonin (HSP60) family. As to quaternary structure, forms a cylinder of 14 subunits composed of two heptameric rings stacked back-to-back. Interacts with the co-chaperonin GroES.

The protein localises to the cytoplasm. The catalysed reaction is ATP + H2O + a folded polypeptide = ADP + phosphate + an unfolded polypeptide.. Functionally, together with its co-chaperonin GroES, plays an essential role in assisting protein folding. The GroEL-GroES system forms a nano-cage that allows encapsulation of the non-native substrate proteins and provides a physical environment optimized to promote and accelerate protein folding. The sequence is that of Chaperonin GroEL from Thermus thermophilus.